A 293-amino-acid polypeptide reads, in one-letter code: Alcohol dehydrogenase 1 (293 aa).

5 residues coordinate Zn(2+): C26, C29, C32, C40, and C104. Residues 129 to 134 (GLGAVG), D153, R158, T199, V222, 222 to 224 (VGV), and F249 contribute to the NAD(+) site.

This sequence belongs to the zinc-containing alcohol dehydrogenase family. As to quaternary structure, homodimer. The cofactor is Zn(2+).

Its subcellular location is the cytoplasm. The catalysed reaction is a primary alcohol + NAD(+) = an aldehyde + NADH + H(+). The enzyme catalyses a secondary alcohol + NAD(+) = a ketone + NADH + H(+). The polypeptide is Alcohol dehydrogenase 1 (ADH1) (Zea luxurians (Guatemalan teosinte)).